Consider the following 477-residue polypeptide: Ketoisovalerate oxidoreductase subunit VorA (477 aa).

As to quaternary structure, heterotrimer of the VorA, VorB and VorC subunits.

The catalysed reaction is 3-methyl-2-oxobutanoate + 2 oxidized [2Fe-2S]-[ferredoxin] + CoA = 2-methylpropanoyl-CoA + 2 reduced [2Fe-2S]-[ferredoxin] + CO2 + H(+). In Methanothermobacter thermautotrophicus (strain ATCC 29096 / DSM 1053 / JCM 10044 / NBRC 100330 / Delta H) (Methanobacterium thermoautotrophicum), this protein is Ketoisovalerate oxidoreductase subunit VorA (vorA).